A 320-amino-acid chain; its full sequence is UPF0053 protein in cps region (320 aa).

Residues 4-24 traverse the membrane as a helical segment; that stretch reads CLSFLLMIGFSLIAEGFSFII. CBS domains follow at residues 121–183 and 186–244; these read MTSR…PLDL and LVRQ…PNEV.

Belongs to the UPF0053 family.

The protein resides in the cell membrane. The chain is UPF0053 protein in cps region from Klebsiella pneumoniae.